Here is a 473-residue protein sequence, read N- to C-terminus: Ras-GEF domain-containing family member 1B (473 aa).

The region spanning 34–161 (HDNNLLSGSL…NVQQMMQCLI (128 aa)) is the N-terminal Ras-GEF domain. Residues 205–453 (DPYTLAQQLT…YLASYESEGP (249 aa)) enclose the Ras-GEF domain.

In terms of assembly, interacts with CCDC124 during cytokinesis. Interacts with Ras family proteins. As to expression, constitutively expressed in brain, intestine and testis. Low constitutive expression, if any, in heart, lung, lymph nodes and thymus. Up-regulated in heart, kidney, liver, lymph nodes, spleen and thymus at day 20 after infection with Trypanosoma cruzi. Not detected in muscle.

Its subcellular location is the early endosome. It localises to the late endosome. The protein resides in the midbody. Functionally, guanine nucleotide exchange factor (GEF) with specificity for RAP2A, it doesn't seems to activate other Ras family proteins (in vitro). The polypeptide is Ras-GEF domain-containing family member 1B (Rasgef1b) (Mus musculus (Mouse)).